We begin with the raw amino-acid sequence, 191 residues long: MEPIRVIESRTVVLPRENVDTDQIIPARFLKVTDKKGLGKALFSDWRYAADGSPRPDFVLNRPEAQGCSILVAGDNFGCGSSREHAPWALVDAGVRAVISTRIADIFRNNALKNGLVPVVLDPASHAKLLAAPGASVRVDVEAQTVTLPDGSTAKFPIDGFARYCLLNGVDELGFLLAQDADIAAFEGGRR.

It belongs to the LeuD family. LeuD type 1 subfamily. As to quaternary structure, heterodimer of LeuC and LeuD.

It catalyses the reaction (2R,3S)-3-isopropylmalate = (2S)-2-isopropylmalate. Its pathway is amino-acid biosynthesis; L-leucine biosynthesis; L-leucine from 3-methyl-2-oxobutanoate: step 2/4. Its function is as follows. Catalyzes the isomerization between 2-isopropylmalate and 3-isopropylmalate, via the formation of 2-isopropylmaleate. The polypeptide is 3-isopropylmalate dehydratase small subunit (Anaeromyxobacter dehalogenans (strain 2CP-C)).